The chain runs to 163 residues: Beta-lactoglobulin-2 (163 aa).

2 disulfide bridges follow: cysteine 66-cysteine 161 and cysteine 106-cysteine 120.

The protein belongs to the calycin superfamily. Lipocalin family. In terms of assembly, monomer.

It localises to the secreted. Its function is as follows. Lactoglobulin is the primary component of whey, it binds retinol and is probably involved in the transport of that molecule. In Equus asinus (Donkey), this protein is Beta-lactoglobulin-2 (LGB2).